Here is an 84-residue protein sequence, read N- to C-terminus: Anaphase-promoting complex subunit 11 (84 aa).

Residues 34-77 (CPDCKLPGDDCPLIWGACNHAFHLHCILKWVNSQTSQAHCPMCR) form an RING-type; atypical zinc finger.

Belongs to the RING-box family. Part of the APC/C complex composed of at least 10 subunits. Interacts with APC2.

It localises to the cytoplasm. It is found in the nucleus. Its pathway is protein modification; protein ubiquitination. Functionally, component of the anaphase promoting complex/cyclosome (APC/C), a cell cycle-regulated E3 ubiquitin-protein ligase complex that controls progression through mitosis and the G1 phase of the cell cycle. The APC/C complex controls several key steps in the cell cycle by mediating ubiquitination and subsequent degradation of target proteins such as cyclins. The APC/C complex is required for the female gametophyte development and is involved in several aspect of development by controlling cell division and cell elongation. Involved in the control of endoreduplication. May recruit the E2 ubiquitin-conjugating enzymes to the complex. The protein is Anaphase-promoting complex subunit 11 of Arabidopsis thaliana (Mouse-ear cress).